Here is a 194-residue protein sequence, read N- to C-terminus: Protein GrpE (194 aa).

Residues 1–12 are compositionally biased toward polar residues; it reads MSSKEQNTPNEQ. Positions 1–39 are disordered; sequence MSSKEQNTPNEQASDEIETEQAKNQGADTAAEAADQRDE.

It belongs to the GrpE family. Homodimer.

The protein localises to the cytoplasm. In terms of biological role, participates actively in the response to hyperosmotic and heat shock by preventing the aggregation of stress-denatured proteins, in association with DnaK and GrpE. It is the nucleotide exchange factor for DnaK and may function as a thermosensor. Unfolded proteins bind initially to DnaJ; upon interaction with the DnaJ-bound protein, DnaK hydrolyzes its bound ATP, resulting in the formation of a stable complex. GrpE releases ADP from DnaK; ATP binding to DnaK triggers the release of the substrate protein, thus completing the reaction cycle. Several rounds of ATP-dependent interactions between DnaJ, DnaK and GrpE are required for fully efficient folding. This is Protein GrpE from Erwinia tasmaniensis (strain DSM 17950 / CFBP 7177 / CIP 109463 / NCPPB 4357 / Et1/99).